We begin with the raw amino-acid sequence, 134 residues long: uncharacterized protein (134 aa).

Residues 1–16 form the signal peptide; sequence MAKAVALLLAAIAASA.

This is an uncharacterized protein from Oryza sativa subsp. indica (Rice).